The primary structure comprises 181 residues: Adenine phosphoribosyltransferase (181 aa).

The protein belongs to the purine/pyrimidine phosphoribosyltransferase family. As to quaternary structure, homodimer.

It is found in the cytoplasm. It carries out the reaction AMP + diphosphate = 5-phospho-alpha-D-ribose 1-diphosphate + adenine. The protein operates within purine metabolism; AMP biosynthesis via salvage pathway; AMP from adenine: step 1/1. Catalyzes a salvage reaction resulting in the formation of AMP, that is energically less costly than de novo synthesis. The chain is Adenine phosphoribosyltransferase from Methylobacterium nodulans (strain LMG 21967 / CNCM I-2342 / ORS 2060).